The primary structure comprises 162 residues: Transcription elongation factor GreA (162 aa).

Positions 46 to 77 form a coiled coil; the sequence is RENAEYKAAREEQTRLNNMVTRLQEEIERAQV.

The protein belongs to the GreA/GreB family.

Its function is as follows. Necessary for efficient RNA polymerase transcription elongation past template-encoded arresting sites. The arresting sites in DNA have the property of trapping a certain fraction of elongating RNA polymerases that pass through, resulting in locked ternary complexes. Cleavage of the nascent transcript by cleavage factors such as GreA or GreB allows the resumption of elongation from the new 3'terminus. GreA releases sequences of 2 to 3 nucleotides. The sequence is that of Transcription elongation factor GreA from Treponema pallidum (strain Nichols).